Reading from the N-terminus, the 252-residue chain is 5-oxoprolinase subunit A (252 aa).

The protein belongs to the LamB/PxpA family. Forms a complex composed of PxpA, PxpB and PxpC.

The catalysed reaction is 5-oxo-L-proline + ATP + 2 H2O = L-glutamate + ADP + phosphate + H(+). Its function is as follows. Catalyzes the cleavage of 5-oxoproline to form L-glutamate coupled to the hydrolysis of ATP to ADP and inorganic phosphate. This Mycolicibacterium gilvum (strain PYR-GCK) (Mycobacterium gilvum (strain PYR-GCK)) protein is 5-oxoprolinase subunit A.